Here is a 502-residue protein sequence, read N- to C-terminus: MSEQEVKELDLNGEMLVRREKLAALRAKGNAFPNKFRRDVLAQDLHNQYDSEDGEILKEKGVEVQVAGRIMTRRAMGKATFITIQDMSGKIQLYVARDNLPEGVYKDEVGTWDLGDIIGVKGTLFKTKTDELTVKTTEVQLLTKALRPLPDKFHGLTDQEVRYRQRYLDLISNEESRRTFIIRSKVVAGIREYFISKGFMEVETPMLQVIPGGASARPFVTHHNALDVDMYLRIAPELYLKRLVVGGFERVFELNRNFRNEGVSVRHNPEFTMLEYYQAYADYHDLMDNTEELLRKLAIDILGTTIVKYGEYEFDFGKPFERITLHDATVKYGADKGIVKEDLYDFDRAKATAERLGIEVQKSWGLGSIVNAIFEEVAEHHLIQPTFLMAHPAEISPLARRNDENPDVTDRFELFIGGREIGNGFSELNDAEDQNERFDAQVAAKEAGDDEAMFKDEDFVVALEHGLPPTAGEGLGIDRLAMLYANAPSIRDVILFPAMRQK.

Mg(2+) is bound by residues E413 and E420.

Belongs to the class-II aminoacyl-tRNA synthetase family. In terms of assembly, homodimer. Mg(2+) is required as a cofactor.

It localises to the cytoplasm. It catalyses the reaction tRNA(Lys) + L-lysine + ATP = L-lysyl-tRNA(Lys) + AMP + diphosphate. The protein is Lysine--tRNA ligase of Haemophilus influenzae (strain PittGG).